The chain runs to 207 residues: Nuclear transcription factor Y subunit beta (207 aa).

Positions 1–52 are a domain; that stretch reads MTMDGDSSTTDASQLGISADYIGGSHYVIQPHDDTEDSMNDHEDTNGSKESF. The interval 27–52 is disordered; that stretch reads YVIQPHDDTEDSMNDHEDTNGSKESF. The span at 39 to 52 shows a compositional bias: basic and acidic residues; it reads MNDHEDTNGSKESF. Residues 53-142 form a b domain region; it reads REQDIYLPIA…PLKLYLQKFR (90 aa). A DNA-binding region spans residues 59–65; it reads LPIANVA. Positions 86 to 97 are subunit association domain (SAD); sequence VQECVSEFISFI. Lysine 140 participates in a covalent cross-link: Glycyl lysine isopeptide (Lys-Gly) (interchain with G-Cter in ubiquitin). Residues 143-207 form a c domain region; sequence EAMKGEKGIG…ISGVQQIQFS (65 aa).

Belongs to the NFYB/HAP3 subunit family. In terms of assembly, heterotrimeric transcription factor composed of three components, NF-YA, NF-YB and NF-YC. NF-YB and NF-YC must interact and dimerize for NF-YA association and DNA binding. Interacts with C1QBP. In terms of processing, monoubiquitination at Lys-140 plays an important role in transcriptional activation by allowing the deposition of histone H3 methylations as well as histone H2B monoubiquitination at 'Lys-121'.

Its subcellular location is the nucleus. In terms of biological role, component of the sequence-specific heterotrimeric transcription factor (NF-Y) which specifically recognizes a 5'-CCAAT-3' box motif found in the promoters of its target genes. NF-Y can function as both an activator and a repressor, depending on its interacting cofactors. The polypeptide is Nuclear transcription factor Y subunit beta (NFYB) (Equus caballus (Horse)).